The chain runs to 122 residues: Acidic phospholipase A2 (122 aa).

7 cysteine pairs are disulfide-bonded: C26–C115, C28–C44, C43–C95, C49–C122, C50–C88, C57–C81, and C75–C86. Ca(2+) is bound by residues Y27, G29, and G31. Residue H47 is part of the active site. Position 48 (D48) interacts with Ca(2+). D89 is an active-site residue.

Belongs to the phospholipase A2 family. Group II subfamily. D49 sub-subfamily. Monomer. The cofactor is Ca(2+). Expressed by the venom gland.

Its subcellular location is the secreted. The catalysed reaction is a 1,2-diacyl-sn-glycero-3-phosphocholine + H2O = a 1-acyl-sn-glycero-3-phosphocholine + a fatty acid + H(+). In terms of biological role, PLA2 catalyzes the calcium-dependent hydrolysis of the 2-acyl groups in 3-sn-phosphoglycerides. This Gloydius blomhoffii (Mamushi) protein is Acidic phospholipase A2.